Here is a 270-residue protein sequence, read N- to C-terminus: Putative pyruvate, phosphate dikinase regulatory protein 2 (270 aa).

Position 151-158 (G151–T158) interacts with ADP.

Belongs to the pyruvate, phosphate/water dikinase regulatory protein family. PDRP subfamily.

It catalyses the reaction N(tele)-phospho-L-histidyl/L-threonyl-[pyruvate, phosphate dikinase] + ADP = N(tele)-phospho-L-histidyl/O-phospho-L-threonyl-[pyruvate, phosphate dikinase] + AMP + H(+). The catalysed reaction is N(tele)-phospho-L-histidyl/O-phospho-L-threonyl-[pyruvate, phosphate dikinase] + phosphate + H(+) = N(tele)-phospho-L-histidyl/L-threonyl-[pyruvate, phosphate dikinase] + diphosphate. Its function is as follows. Bifunctional serine/threonine kinase and phosphorylase involved in the regulation of the pyruvate, phosphate dikinase (PPDK) by catalyzing its phosphorylation/dephosphorylation. The protein is Putative pyruvate, phosphate dikinase regulatory protein 2 of Listeria monocytogenes serotype 4b (strain F2365).